The following is a 208-amino-acid chain: Large ribosomal subunit protein uL3 (208 aa).

Residue Gln-149 is modified to N5-methylglutamine.

This sequence belongs to the universal ribosomal protein uL3 family. Part of the 50S ribosomal subunit. Forms a cluster with proteins L14 and L19. In terms of processing, methylated by PrmB.

In terms of biological role, one of the primary rRNA binding proteins, it binds directly near the 3'-end of the 23S rRNA, where it nucleates assembly of the 50S subunit. This is Large ribosomal subunit protein uL3 from Actinobacillus succinogenes (strain ATCC 55618 / DSM 22257 / CCUG 43843 / 130Z).